We begin with the raw amino-acid sequence, 750 residues long: Retron Eco8 OLD nuclease (750 aa).

Residues 1 to 173 (MTIESIRVKN…IDLYDWNPIW (173 aa)) form an ATPase domain N-terminus region. An ATP-binding site is contributed by 33–37 (NVGKS). Residues 174–260 (KLISNLNSFN…TQSDGTNSNK (87 aa)) form a dimerization domain region. An ATPase domain C-terminus region spans residues 261–390 (FLETLLHLLI…FSDNEARLFF (130 aa)). The segment at 391 to 704 (SEYIVFVEGA…SGWVTTFLNY (314 aa)) is toprim domain. Positions 398, 402, 450, 452, 623, and 641 each coordinate a divalent metal cation.

Belongs to the class 1 OLD nuclease family. In terms of assembly, homodimer. Requires a divalent metal cation as cofactor.

Its function is as follows. Probable nuclease member of antiviral defense system retron Eco8, composed of an reverse transcriptase (RT), this nuclease and a non-coding RNA (ncRNA) encoded between them. Expression of retron Eco8 confers protection against bacteriophages T4, T6, T7 and SECphi4, SECphi6 and SECphi18. At multiplicity of infection (MOI) of 0.02 cultures slow growth when infected with SECphi4 but do not collapse, at MOI 2 cultures collapse. When the retron is cloned in another E.coli strain synthesizes msDNA (a branched RNA linked by a 2',5'-phosphodiester bond to a single-stranded DNA). The retron transcript serves as primer and template to the reaction, and codes for the RT. The sequence is that of Retron Eco8 OLD nuclease from Escherichia coli.